Consider the following 153-residue polypeptide: Large ribosomal subunit protein uL15 (153 aa).

Residues 21 to 41 form a disordered region; sequence RGIGSGKGKTGGRGIKGQKSR. A compositionally biased stretch (gly residues) spans 23-35; it reads IGSGKGKTGGRGI.

It belongs to the universal ribosomal protein uL15 family. As to quaternary structure, part of the 50S ribosomal subunit.

Functionally, binds to the 23S rRNA. This is Large ribosomal subunit protein uL15 from Rickettsia rickettsii (strain Iowa).